A 189-amino-acid chain; its full sequence is Ribosome maturation factor RimP (189 aa).

The protein belongs to the RimP family.

Its subcellular location is the cytoplasm. Required for maturation of 30S ribosomal subunits. This Corynebacterium kroppenstedtii (strain DSM 44385 / JCM 11950 / CIP 105744 / CCUG 35717) protein is Ribosome maturation factor RimP.